A 171-amino-acid chain; its full sequence is NADH-quinone oxidoreductase subunit I 1 (171 aa).

2 4Fe-4S ferredoxin-type domains span residues 39–71 (IVLT…LTKA) and 81–110 (EHFR…LTPD). Residues C51, C54, C57, C61, C90, C93, C96, and C100 each contribute to the [4Fe-4S] cluster site.

This sequence belongs to the complex I 23 kDa subunit family. As to quaternary structure, NDH-1 is composed of 14 different subunits. Subunits NuoA, H, J, K, L, M, N constitute the membrane sector of the complex. Requires [4Fe-4S] cluster as cofactor.

It localises to the cell inner membrane. It catalyses the reaction a quinone + NADH + 5 H(+)(in) = a quinol + NAD(+) + 4 H(+)(out). NDH-1 shuttles electrons from NADH, via FMN and iron-sulfur (Fe-S) centers, to quinones in the respiratory chain. The immediate electron acceptor for the enzyme in this species is believed to be ubiquinone. Couples the redox reaction to proton translocation (for every two electrons transferred, four hydrogen ions are translocated across the cytoplasmic membrane), and thus conserves the redox energy in a proton gradient. The protein is NADH-quinone oxidoreductase subunit I 1 of Rhodopseudomonas palustris (strain BisB5).